The sequence spans 515 residues: MEAVISFDFQNCFIFILIFLLTFLCFFFFFKKPKDSRVNFDLPPSPPSLPIIGHVHLLLSTLTHKSLQKLSSRYGPLLYLRIFNVPIILVSSASVAYEIFRTQDVNISSRGVTAVDESLVFGSSSFVTAPYGDYWKFMKKLTVMKLLGPQAQEQSRDIRADDIKRFCRNLLDKARKKESVEIGKEAMNLMNNILCKMSMGRSFSEENGETEKLRGLVTESIGLMKKMFLAVLLRRQLQKLGISLFKKDIMGVSNKFDVLLEKVLVEHREKPEKDQGTVMLDVLLAAYGDENAEYKITKNHIKAFFVDLFIGATDTSVQTIQWTMAEIMNNTHILERMREEIDSVVGKSRLIQETDLPNLPYLHAVIKEALRLHPPGPLLPREFQQGCKIGGFYIPEKTTLLINAYVVMRDPNVWEDPEEFKPERFLASSRSGQEDERREQALKFLPFGSGRRGCPGSNLAYMIVGSAIGMMVQCFDWRIEGEKVNMKEAVKGTILTMAHPLKLTPVTRQPPLTWI.

A helical membrane pass occupies residues 9-29; sequence FQNCFIFILIFLLTFLCFFFF. A heme-binding site is contributed by C454.

The protein belongs to the cytochrome P450 family. Heme serves as cofactor.

It is found in the membrane. Its function is as follows. Plays a role in the gravitropic response of the inflorescence stems and roots. May affect the synthesis of flavonols that have a role in regulating auxin transport. This Arabidopsis thaliana (Mouse-ear cress) protein is Cytochrome P450 705A22.